The following is an 870-amino-acid chain: MOG interacting and ectopic P-granules protein 1 (870 aa).

Residues 1 to 244 form a disordered region; sequence MVTADETVLA…VPEEDNNEQA (244 aa). Over residues 9-20 the composition is skewed to polar residues; the sequence is LATTTNTTSMSV. Residues 41-51 are compositionally biased toward basic and acidic residues; sequence EQLKAEQREVM. 3 stretches are compositionally biased toward acidic residues: residues 77–99, 129–142, and 203–214; these read EVIE…DENG, IEQD…EITE, and IELDDDDDDEIQ. 2 C2H2-type zinc fingers span residues 421–444 and 450–473; these read HRCD…ENLH and FQCT…FETH. The CCHC-type zinc-finger motif lies at 486–508; sequence YPCAICEEDFNFKGVREQHYKQC. Polar residues-rich tracts occupy residues 673-688 and 695-708; these read LQAA…SQKT and KLVT…VGSS. The disordered stretch occupies residues 673 to 708; sequence LQAAVNSMRSQNSQKTPTHRSSKLVTTPSHATVGSS. C2H2-type zinc fingers lie at residues 713–736, 753–776, 794–815, and 826–849; these read FVCE…QTTH, LACS…VMSH, GRCK…VADH, and YSCD…TSNH. The disordered stretch occupies residues 847–870; that stretch reads SNHPKGDKKTSTPAKKDDCITLDD. The segment covering 850-870 has biased composition (basic and acidic residues); the sequence is PKGDKKTSTPAKKDDCITLDD.

In terms of assembly, interacts with hda-1, let-418, lin-1, mog-1, mog-4, mog-5, mog-6, pie-1 and unc-98. In terms of processing, sumoylated. In terms of tissue distribution, expressed in somatic cells of embryos, the head, hypodermis and tail of larvae and the germline of adults, including oocytes but not mature sperm and spermatocytes.

It localises to the nucleus. Has a broad role in development, specifically in the genetic pathway SynMuvB that negatively regulates specification of the vulval cell fate. Required for fem-3 3'-UTR-mediated repression in the regulation of the sperm/oocyte switch. Acts by regulating the translation of fem-3 mRNA, by binding to its 3'-UTR. This is MOG interacting and ectopic P-granules protein 1 from Caenorhabditis elegans.